The chain runs to 396 residues: Acetylornithine aminotransferase 2 (396 aa).

Residues 102–103 (GA) and Phe134 each bind pyridoxal 5'-phosphate. Arg137 lines the N(2)-acetyl-L-ornithine pocket. Residue 219 to 222 (DEVQ) participates in pyridoxal 5'-phosphate binding. Lys248 carries the N6-(pyridoxal phosphate)lysine modification. Thr276 serves as a coordination point for pyridoxal 5'-phosphate.

The protein belongs to the class-III pyridoxal-phosphate-dependent aminotransferase family. ArgD subfamily. In terms of assembly, homodimer. It depends on pyridoxal 5'-phosphate as a cofactor.

The protein resides in the cytoplasm. It catalyses the reaction N(2)-acetyl-L-ornithine + 2-oxoglutarate = N-acetyl-L-glutamate 5-semialdehyde + L-glutamate. It participates in amino-acid biosynthesis; L-arginine biosynthesis; N(2)-acetyl-L-ornithine from L-glutamate: step 4/4. The polypeptide is Acetylornithine aminotransferase 2 (Bordetella parapertussis (strain 12822 / ATCC BAA-587 / NCTC 13253)).